The primary structure comprises 465 residues: Cruciform DNA-recognizing protein 1 (465 aa).

Disordered regions lie at residues 107–227 (EAGG…VPNP) and 247–275 (RLNKKEEVPEPVAGPIVESSVTEKSPALP). Over residues 127–151 (NRKKNKRNNKKRKSKLKKKSTKNNK) the composition is skewed to basic residues. Phosphoserine occurs at positions 153 and 156. A compositionally biased stretch (acidic residues) spans 156–165 (SXDDNEEEDX). Residues 160–161 (NE) are X-DNA-binding. A compositionally biased stretch (low complexity) spans 166–177 (VTGTTTEDVTGT). T182 carries the phosphothreonine modification. Residue S271 is modified to Phosphoserine. T295 is subject to Phosphothreonine. Positions 312 to 465 (PTPEAQISIP…FFGKLKKLFK (154 aa)) are disordered. Phosphoserine occurs at positions 319 and 343. The span at 337–363 (LVEKRESTEGVSDGSKKVENKAKKDEE) shows a compositional bias: basic and acidic residues. The residue at position 366 (T366) is a Phosphothreonine. Basic and acidic residues-rich tracts occupy residues 385–398 (AEGRKSPAVSEEKE) and 404–428 (EKGSKEVKRSETSKEKKPSAKEVKK). S394 is modified (phosphoserine). S440 carries the phosphoserine modification. Basic residues predominate over residues 451-465 (KKKTGFFGKLKKLFK).

Belongs to the CRP1/MDG1 family. Cleaved in the vicinity of position 160 to give an X-DNA-binding N-terminal subpeptide and a non-DNA-binding C-terminal subpeptide.

In terms of biological role, cruciform DNA-binding protein which exerts an enhancing effect on the cleavage of cruciform DNA (X-DNA) by endonuclease VII from bacteriophage T4. The chain is Cruciform DNA-recognizing protein 1 (CRP1) from Saccharomyces cerevisiae (strain FostersB) (Baker's yeast).